A 485-amino-acid polypeptide reads, in one-letter code: Glycogen synthase (485 aa).

Lys-20 serves as a coordination point for ADP-alpha-D-glucose.

Belongs to the glycosyltransferase 1 family. Bacterial/plant glycogen synthase subfamily.

It carries out the reaction [(1-&gt;4)-alpha-D-glucosyl](n) + ADP-alpha-D-glucose = [(1-&gt;4)-alpha-D-glucosyl](n+1) + ADP + H(+). It functions in the pathway glycan biosynthesis; glycogen biosynthesis. In terms of biological role, synthesizes alpha-1,4-glucan chains using ADP-glucose. The chain is Glycogen synthase from Vibrio vulnificus (strain CMCP6).